Consider the following 62-residue polypeptide: SPbeta prophage-derived uncharacterized protein YonU (62 aa).

Residues 1–32 (MEKKFLDAIQQLTKELEMLKKDIDSIKEATVR) adopt a coiled-coil conformation.

This Bacillus subtilis (strain 168) protein is SPbeta prophage-derived uncharacterized protein YonU (yonU).